The chain runs to 429 residues: Serine--tRNA ligase (429 aa).

234-236 (TSE) provides a ligand contact to L-serine. ATP contacts are provided by residues 265-267 (RKE) and Val281. Residue Glu288 coordinates L-serine. Residue 352-355 (ELVS) participates in ATP binding. Thr389 lines the L-serine pocket.

Belongs to the class-II aminoacyl-tRNA synthetase family. Type-1 seryl-tRNA synthetase subfamily. As to quaternary structure, homodimer. The tRNA molecule probably binds across the dimer.

The catalysed reaction is tRNA(Ser) + L-serine + ATP = L-seryl-tRNA(Ser) + AMP + diphosphate + H(+). It carries out the reaction tRNA(Sec) + L-serine + ATP = L-seryl-tRNA(Sec) + AMP + diphosphate + H(+). The protein operates within aminoacyl-tRNA biosynthesis; selenocysteinyl-tRNA(Sec) biosynthesis; L-seryl-tRNA(Sec) from L-serine and tRNA(Sec): step 1/1. Its function is as follows. Catalyzes the attachment of serine to tRNA(Ser). Is also probably able to aminoacylate tRNA(Sec) with serine, to form the misacylated tRNA L-seryl-tRNA(Sec), which will be further converted into selenocysteinyl-tRNA(Sec). In Encephalitozoon cuniculi (strain GB-M1) (Microsporidian parasite), this protein is Serine--tRNA ligase.